The following is a 276-amino-acid chain: Diaminopimelate epimerase (276 aa).

Positions 13, 46, and 66 each coordinate substrate. The active-site Proton donor is the Cys-75. Substrate is bound by residues Gly-76–Asn-77, Asn-159, Asn-192, and Glu-210–Arg-211. Cys-219 functions as the Proton acceptor in the catalytic mechanism. Gly-220–Thr-221 serves as a coordination point for substrate.

Belongs to the diaminopimelate epimerase family. Homodimer.

Its subcellular location is the cytoplasm. It catalyses the reaction (2S,6S)-2,6-diaminopimelate = meso-2,6-diaminopimelate. The protein operates within amino-acid biosynthesis; L-lysine biosynthesis via DAP pathway; DL-2,6-diaminopimelate from LL-2,6-diaminopimelate: step 1/1. Catalyzes the stereoinversion of LL-2,6-diaminopimelate (L,L-DAP) to meso-diaminopimelate (meso-DAP), a precursor of L-lysine and an essential component of the bacterial peptidoglycan. This chain is Diaminopimelate epimerase, found in Pseudomonas aeruginosa (strain UCBPP-PA14).